We begin with the raw amino-acid sequence, 353 residues long: Terpene synthase 1 (353 aa).

The DDxx(x)D/E motif motif lies at 81–86 (DDAIDA). The NDxxSxxxD/E motif signature appears at 222-230 (NDLVSYEKE).

This sequence belongs to the terpene synthase family.

It catalyses the reaction (2E,6E)-farnesyl diphosphate = (2S,3R,6S,9S)-(-)-protoillud-7-ene + diphosphate. Functionally, terpene synthase that converts its substrate farnesyl diphosphate (FPP) into the sesquiterpene protoillud-7-ene. The chain is Terpene synthase 1 from Tieghemostelium lacteum (Slime mold).